Reading from the N-terminus, the 513-residue chain is 2-isopropylmalate synthase (513 aa).

Residues 4 to 268 (IKIFDTTLRD…ETGIRTELIY (265 aa)) form the Pyruvate carboxyltransferase domain. The Mn(2+) site is built by Asp-13, His-203, His-205, and Asn-239. The regulatory domain stretch occupies residues 392-513 (RLVHFHVHTG…GLLRKNGGVE (122 aa)).

It belongs to the alpha-IPM synthase/homocitrate synthase family. LeuA type 1 subfamily. In terms of assembly, homodimer. The cofactor is Mn(2+).

Its subcellular location is the cytoplasm. The enzyme catalyses 3-methyl-2-oxobutanoate + acetyl-CoA + H2O = (2S)-2-isopropylmalate + CoA + H(+). It functions in the pathway amino-acid biosynthesis; L-leucine biosynthesis; L-leucine from 3-methyl-2-oxobutanoate: step 1/4. Its function is as follows. Catalyzes the condensation of the acetyl group of acetyl-CoA with 3-methyl-2-oxobutanoate (2-ketoisovalerate) to form 3-carboxy-3-hydroxy-4-methylpentanoate (2-isopropylmalate). This chain is 2-isopropylmalate synthase, found in Thermotoga neapolitana (strain ATCC 49049 / DSM 4359 / NBRC 107923 / NS-E).